We begin with the raw amino-acid sequence, 122 residues long: MKTIVRLFAILMVLISSVGFVGSAVAAELNPVDAKLTTEYGQKIDLNNEDVRGFRQLRGFYPNLAAKIIKYSPYDSVEEVLDIPGLSERQRQRLEANLDKFVVTPPSSELNEGGDRINPGLY.

The signal sequence occupies residues 1-26 (MKTIVRLFAILMVLISSVGFVGSAVA).

It belongs to the PsbU family. In terms of assembly, PSII is composed of 1 copy each of membrane proteins PsbA, PsbB, PsbC, PsbD, PsbE, PsbF, PsbH, PsbI, PsbJ, PsbK, PsbL, PsbM, PsbT, PsbX, PsbY, PsbZ, Psb30/Ycf12, peripheral proteins PsbO, CyanoQ (PsbQ), PsbU, PsbV and a large number of cofactors. It forms dimeric complexes.

It is found in the cellular thylakoid membrane. In terms of biological role, one of the extrinsic, lumenal subunits of photosystem II (PSII). PSII is a light-driven water plastoquinone oxidoreductase, using light energy to abstract electrons from H(2)O, generating a proton gradient subsequently used for ATP formation. The extrinsic proteins stabilize the structure of photosystem II oxygen-evolving complex (OEC), the ion environment of oxygen evolution and protect the OEC against heat-induced inactivation. In Crocosphaera subtropica (strain ATCC 51142 / BH68) (Cyanothece sp. (strain ATCC 51142)), this protein is Photosystem II extrinsic protein U.